We begin with the raw amino-acid sequence, 208 residues long: 3-isopropylmalate dehydratase small subunit (208 aa).

Belongs to the LeuD family. LeuD type 1 subfamily. As to quaternary structure, heterodimer of LeuC and LeuD.

The catalysed reaction is (2R,3S)-3-isopropylmalate = (2S)-2-isopropylmalate. It participates in amino-acid biosynthesis; L-leucine biosynthesis; L-leucine from 3-methyl-2-oxobutanoate: step 2/4. In terms of biological role, catalyzes the isomerization between 2-isopropylmalate and 3-isopropylmalate, via the formation of 2-isopropylmaleate. The sequence is that of 3-isopropylmalate dehydratase small subunit (leuD) from Buchnera aphidicola subsp. Diuraphis noxia.